The chain runs to 173 residues: Lipoprotein signal peptidase (173 aa).

3 consecutive transmembrane segments (helical) span residues 12-32 (WLWL…WTIQ), 67-87 (WQRY…VYLL), and 102-122 (ALIL…GYVI). Catalysis depends on residues D123 and D141. Residues 137–157 (FNIADSAIFTGAVIMIFESFF) traverse the membrane as a helical segment.

The protein belongs to the peptidase A8 family.

It is found in the cell inner membrane. The enzyme catalyses Release of signal peptides from bacterial membrane prolipoproteins. Hydrolyzes -Xaa-Yaa-Zaa-|-(S,diacylglyceryl)Cys-, in which Xaa is hydrophobic (preferably Leu), and Yaa (Ala or Ser) and Zaa (Gly or Ala) have small, neutral side chains.. The protein operates within protein modification; lipoprotein biosynthesis (signal peptide cleavage). In terms of biological role, this protein specifically catalyzes the removal of signal peptides from prolipoproteins. This Psychromonas ingrahamii (strain DSM 17664 / CCUG 51855 / 37) protein is Lipoprotein signal peptidase.